Reading from the N-terminus, the 158-residue chain is Low molecular weight phosphotyrosine protein phosphatase (158 aa).

A2 is modified (N-acetylalanine). C13 acts as the Nucleophile in catalysis. R19 is a catalytic residue. D130 acts as the Proton donor in catalysis. Phosphotyrosine is present on residues Y132 and Y133.

This sequence belongs to the low molecular weight phosphotyrosine protein phosphatase family. Interacts with EPHA2; dephosphorylates EPHA2. Interacts with EPHB1. Interacts with the SH3 domain of SPTAN1. Phosphorylated by LCK. Phosphorylation at Tyr-132 increases its phosphatase activity.

It is found in the cytoplasm. It carries out the reaction O-phospho-L-tyrosyl-[protein] + H2O = L-tyrosyl-[protein] + phosphate. It catalyses the reaction a phosphate monoester + H2O = an alcohol + phosphate. Inhibited by sulfhydryl reagents. Its function is as follows. Acts on tyrosine phosphorylated proteins, low-MW aryl phosphates and natural and synthetic acyl phosphates with differences in substrate specificity between isoform 1 and isoform 2. The polypeptide is Low molecular weight phosphotyrosine protein phosphatase (ACP1) (Sus scrofa (Pig)).